A 138-amino-acid chain; its full sequence is ATP synthase epsilon chain, chloroplastic (138 aa).

This sequence belongs to the ATPase epsilon chain family. In terms of assembly, F-type ATPases have 2 components, CF(1) - the catalytic core - and CF(0) - the membrane proton channel. CF(1) has five subunits: alpha(3), beta(3), gamma(1), delta(1), epsilon(1). CF(0) has three main subunits: a, b and c.

The protein resides in the plastid. Its subcellular location is the chloroplast thylakoid membrane. Produces ATP from ADP in the presence of a proton gradient across the membrane. The chain is ATP synthase epsilon chain, chloroplastic from Anthoceros angustus (Hornwort).